Reading from the N-terminus, the 207-residue chain is MGRCSGRCTLVGICCLQLAAALQRQIFDFLGYQWAPILANFLHIMVVILGILGTLHYRSRYLILYSIWLALWVAWNAFIICFYLEVGHFSQHRDLIMNFNTSMHRSWWMENGPGCLVTPVRGPPLPLADHHMVTVTGCLLDYPYIEALSSALQIFLALFGFVYACYVSKVFMDEEDSFDFIGSYDSYGYQAPMKTSHLQLQPLYKPG.

The next 3 helical transmembrane spans lie at 2–22 (GRCSGRCTLVGICCLQLAAAL), 35–55 (APILANFLHIMVVILGILGTL), and 62–82 (LILYSIWLALWVAWNAFIICF). Asparagine 100 is a glycosylation site (N-linked (GlcNAc...) asparagine). A helical membrane pass occupies residues 147–167 (ALSSALQIFLALFGFVYACYV).

This sequence belongs to the NKAIN family. In terms of assembly, interacts with atp1b1 C-terminus.

The protein localises to the cell membrane. The sequence is that of Sodium/potassium-transporting ATPase subunit beta-1-interacting protein 1 (nkain1) from Xenopus tropicalis (Western clawed frog).